A 276-amino-acid polypeptide reads, in one-letter code: Diaminopimelate epimerase (276 aa).

Substrate contacts are provided by N13, Q46, and N66. C75 acts as the Proton donor in catalysis. Residues 76–77 (GN), N159, N192, and 210–211 (ER) contribute to the substrate site. The Proton acceptor role is filled by C219. 220 to 221 (GT) contributes to the substrate binding site.

Belongs to the diaminopimelate epimerase family. As to quaternary structure, homodimer.

It localises to the cytoplasm. It catalyses the reaction (2S,6S)-2,6-diaminopimelate = meso-2,6-diaminopimelate. It participates in amino-acid biosynthesis; L-lysine biosynthesis via DAP pathway; DL-2,6-diaminopimelate from LL-2,6-diaminopimelate: step 1/1. In terms of biological role, catalyzes the stereoinversion of LL-2,6-diaminopimelate (L,L-DAP) to meso-diaminopimelate (meso-DAP), a precursor of L-lysine and an essential component of the bacterial peptidoglycan. The chain is Diaminopimelate epimerase from Stutzerimonas stutzeri (strain A1501) (Pseudomonas stutzeri).